A 374-amino-acid polypeptide reads, in one-letter code: 2-aminoethylphosphonate--pyruvate transaminase 1 (374 aa).

Lys195 bears the N6-(pyridoxal phosphate)lysine mark.

The protein belongs to the class-V pyridoxal-phosphate-dependent aminotransferase family. PhnW subfamily. As to quaternary structure, homodimer. Pyridoxal 5'-phosphate is required as a cofactor.

The enzyme catalyses (2-aminoethyl)phosphonate + pyruvate = phosphonoacetaldehyde + L-alanine. Its function is as follows. Involved in phosphonate degradation. The polypeptide is 2-aminoethylphosphonate--pyruvate transaminase 1 (Polaromonas sp. (strain JS666 / ATCC BAA-500)).